We begin with the raw amino-acid sequence, 410 residues long: MAFLGLFSLLVLQSMATGATFPEEAIADLSVNMYNRLRATGEDENILFSPLSIALAMGMMELGAQGSTQKEIRHSMGYDSLKNGEEFSFLKEFSNMVTAKESQYVMKIANSLFVQNGFHVNEEFLQMMKKYFNAAVNHVDFSQNVAVANYINKWVENNTNNLVKDLVSPRDFDAATYLALINAVYFKGNWKSQFRPENTRTFSFTKDDESEVQIPMMYQQGEFYYGEFSDGSNEAGGIYQVLEIPYEGDEISMMLVLSRQEVPLATLEPLVKAQLVEEWANSVKKQKVEVYLPRFTVEQEIDLKDVLKALGITEIFIKDANLTGLSDNKEIFLSKAIHKSFLEVNEEGSEAAAVSGMIAISRMAVLYPQVIVDHPFFFLIRNRRTGTILFMGRVMHPETMNTSGHDFEEL.

The signal sequence occupies residues 1–16; the sequence is MAFLGLFSLLVLQSMA. 3 N-linked (GlcNAc...) asparagine glycosylation sites follow: Asn157, Asn321, and Asn401. The O-linked (Xyl...) (chondroitin sulfate) serine glycan is linked to Ser403.

The protein belongs to the serpin family. As to quaternary structure, monomer. Has a tendency to form large polymers already at 41 and 45 degrees Celsius (in vitro). In terms of tissue distribution, detected in brain cortex and hippocampus pyramidal neurons (at protein level). Detected in cerebrospinal fluid (at protein level). Predominantly expressed in the brain.

It localises to the secreted. It is found in the cytoplasmic vesicle. The protein resides in the secretory vesicle lumen. Its subcellular location is the perikaryon. Its function is as follows. Serine protease inhibitor that inhibits plasminogen activators and plasmin but not thrombin. May be involved in the formation or reorganization of synaptic connections as well as for synaptic plasticity in the adult nervous system. May protect neurons from cell damage by tissue-type plasminogen activator. In Homo sapiens (Human), this protein is Neuroserpin (SERPINI1).